Here is a 450-residue protein sequence, read N- to C-terminus: Bifunctional protein GlmU (450 aa).

Positions 1–229 are pyrophosphorylase; the sequence is MGVALIVLAA…EAETLGINTR (229 aa). UDP-N-acetyl-alpha-D-glucosamine contacts are provided by residues 8–11, K22, Q75, 80–81, 103–105, G141, E155, N170, and N227; these read LAAG, GT, and YGD. D105 is a binding site for Mg(2+). Mg(2+) is bound at residue N227. Positions 230–250 are linker; the sequence is TELAAAEQAFQARARARALED. The N-acetyltransferase stretch occupies residues 251–450; sequence GVTLADPATT…RARKSAKGAQ (200 aa). Positions 316 and 334 each coordinate UDP-N-acetyl-alpha-D-glucosamine. H346 (proton acceptor) is an active-site residue. The UDP-N-acetyl-alpha-D-glucosamine site is built by Y349 and N360. Acetyl-CoA-binding positions include A363, 369-370, S388, T406, and R423; that span reads NY.

It in the N-terminal section; belongs to the N-acetylglucosamine-1-phosphate uridyltransferase family. The protein in the C-terminal section; belongs to the transferase hexapeptide repeat family. In terms of assembly, homotrimer. Mg(2+) is required as a cofactor.

The protein resides in the cytoplasm. The enzyme catalyses alpha-D-glucosamine 1-phosphate + acetyl-CoA = N-acetyl-alpha-D-glucosamine 1-phosphate + CoA + H(+). It carries out the reaction N-acetyl-alpha-D-glucosamine 1-phosphate + UTP + H(+) = UDP-N-acetyl-alpha-D-glucosamine + diphosphate. It functions in the pathway nucleotide-sugar biosynthesis; UDP-N-acetyl-alpha-D-glucosamine biosynthesis; N-acetyl-alpha-D-glucosamine 1-phosphate from alpha-D-glucosamine 6-phosphate (route II): step 2/2. The protein operates within nucleotide-sugar biosynthesis; UDP-N-acetyl-alpha-D-glucosamine biosynthesis; UDP-N-acetyl-alpha-D-glucosamine from N-acetyl-alpha-D-glucosamine 1-phosphate: step 1/1. Its pathway is bacterial outer membrane biogenesis; LPS lipid A biosynthesis. In terms of biological role, catalyzes the last two sequential reactions in the de novo biosynthetic pathway for UDP-N-acetylglucosamine (UDP-GlcNAc). The C-terminal domain catalyzes the transfer of acetyl group from acetyl coenzyme A to glucosamine-1-phosphate (GlcN-1-P) to produce N-acetylglucosamine-1-phosphate (GlcNAc-1-P), which is converted into UDP-GlcNAc by the transfer of uridine 5-monophosphate (from uridine 5-triphosphate), a reaction catalyzed by the N-terminal domain. This Dinoroseobacter shibae (strain DSM 16493 / NCIMB 14021 / DFL 12) protein is Bifunctional protein GlmU.